A 580-amino-acid chain; its full sequence is Multidrug resistance-like ATP-binding protein MdlB (580 aa).

The region spanning Leu25–Gln310 is the ABC transmembrane type-1 domain. Helical transmembrane passes span Ile26 to Ile46, Leu61 to Leu81, Ile150 to Val170, Phe173 to Leu193, Leu247 to Phe267, and Met268 to Ile288. In terms of domain architecture, ABC transporter spans Ile341–Phe575. Gly375–Ser382 is an ATP binding site.

This sequence belongs to the ABC transporter superfamily. Drug exporter-2 (TC 3.A.1.117) family.

It is found in the cell membrane. The catalysed reaction is ATP + H2O + xenobioticSide 1 = ADP + phosphate + xenobioticSide 2.. The chain is Multidrug resistance-like ATP-binding protein MdlB (mdlB) from Buchnera aphidicola subsp. Acyrthosiphon pisum (strain APS) (Acyrthosiphon pisum symbiotic bacterium).